A 194-amino-acid chain; its full sequence is uncharacterized protein (194 aa).

Polar residues predominate over residues 77–92 (QTQPQHQTLSQHLPQT). Positions 77-96 (QTQPQHQTLSQHLPQTHHTD) are disordered. A helical transmembrane segment spans residues 169–189 (FWEILLLIILIAVLVYGIYWL).

Its subcellular location is the host membrane. It localises to the virion. This is an uncharacterized protein from Acanthamoeba polyphaga (Amoeba).